The following is a 142-amino-acid chain: Large ribosomal subunit protein uL11 (142 aa).

This sequence belongs to the universal ribosomal protein uL11 family. Part of the ribosomal stalk of the 50S ribosomal subunit. Interacts with L10 and the large rRNA to form the base of the stalk. L10 forms an elongated spine to which L12 dimers bind in a sequential fashion forming a multimeric L10(L12)X complex. Post-translationally, one or more lysine residues are methylated.

In terms of biological role, forms part of the ribosomal stalk which helps the ribosome interact with GTP-bound translation factors. The polypeptide is Large ribosomal subunit protein uL11 (Mannheimia succiniciproducens (strain KCTC 0769BP / MBEL55E)).